The primary structure comprises 434 residues: Methylenetetrahydrofolate--tRNA-(uracil-5-)-methyltransferase TrmFO (434 aa).

10-15 (GAGLAG) lines the FAD pocket.

It belongs to the MnmG family. TrmFO subfamily. FAD is required as a cofactor.

It is found in the cytoplasm. It carries out the reaction uridine(54) in tRNA + (6R)-5,10-methylene-5,6,7,8-tetrahydrofolate + NADH + H(+) = 5-methyluridine(54) in tRNA + (6S)-5,6,7,8-tetrahydrofolate + NAD(+). The catalysed reaction is uridine(54) in tRNA + (6R)-5,10-methylene-5,6,7,8-tetrahydrofolate + NADPH + H(+) = 5-methyluridine(54) in tRNA + (6S)-5,6,7,8-tetrahydrofolate + NADP(+). Functionally, catalyzes the folate-dependent formation of 5-methyl-uridine at position 54 (M-5-U54) in all tRNAs. The sequence is that of Methylenetetrahydrofolate--tRNA-(uracil-5-)-methyltransferase TrmFO from Bacillus anthracis (strain A0248).